The chain runs to 589 residues: Glucose starvation modulator protein 1 (589 aa).

A DNA-binding region (zn(2)-C6 fungal-type) is located at residues 20–48; that stretch reads CVFCHQKHLQCSNERPCKNCVKRNIGHEC. Disordered stretches follow at residues 59-90, 218-240, and 340-362; these read LTGNGKGSSSKTKTPRKKLKSTPITASSPSVA, NNSNNTSHNDNFIAQNNNNNPEP, and ANGQTEDLLDHNKDDSRKNPGNG. Over residues 80–90 the composition is skewed to polar residues; that stretch reads TPITASSPSVA. The span at 347–357 shows a compositional bias: basic and acidic residues; it reads LLDHNKDDSRK. One can recognise a PAS domain in the interval 471-542; sequence SLLDYKKLVE…FKFFKNIAVN (72 aa).

It belongs to the ERT1/acuK family.

The protein localises to the nucleus. Its function is as follows. Transcription factor which regulates nonfermentable carbon utilization. This chain is Glucose starvation modulator protein 1 (GSM1), found in Candida tropicalis (strain ATCC MYA-3404 / T1) (Yeast).